A 68-amino-acid polypeptide reads, in one-letter code: Intracellular calcium channel modulator CCP-Ts (68 aa).

Positions 1–23 (MNPKLLIVIGLLLATGVCSFAKA) are cleaved as a signal peptide. 3 disulfides stabilise this stretch: C33-C47, C40-C53, and C46-C62.

The protein belongs to the scorpion calcin-like family. In terms of tissue distribution, expressed by the venom gland. In intravenously injected mice, the labeled toxin has preference for heart, liver and lungs.

Its subcellular location is the secreted. The protein resides in the nucleus. In terms of biological role, cell penetrating peptide (CPP) that increases intracellular calcium release through the activation of nuclear inositol 1,4,5-trisphosphate receptors (ITPR) of cardiomyocytes, thereby causing an increase in the contraction frequency of these cells. In vivo, this toxin is not lethal to mice, hovewer anti-CPP serum reduces venom lethality, suggesting that this toxin is lethal when it acts in synergy with other venom components. This is Intracellular calcium channel modulator CCP-Ts from Tityus serrulatus (Brazilian scorpion).